A 35-amino-acid chain; its full sequence is Cytochrome c-550 (35 aa).

C17, C20, and H21 together coordinate heme c.

Post-translationally, binds 1 heme c group covalently per subunit.

Functionally, monoheme cytochrome which functions as an electron carrier in the reduction of nitrite by membrane vesicles. This chain is Cytochrome c-550, found in Virgibacillus halodenitrificans (Bacillus halodenitrificans).